Reading from the N-terminus, the 193-residue chain is Ribonuclease HII (193 aa).

In terms of domain architecture, RNase H type-2 spans 1–193 (MTLGIDEAGR…SFALKNNWFS (193 aa)). Residues Asp6, Glu7, and Asp103 each contribute to the a divalent metal cation site.

This sequence belongs to the RNase HII family. It depends on Mn(2+) as a cofactor. Requires Mg(2+) as cofactor.

It localises to the cytoplasm. It catalyses the reaction Endonucleolytic cleavage to 5'-phosphomonoester.. Functionally, endonuclease that specifically degrades the RNA of RNA-DNA hybrids. In Helicobacter acinonychis (strain Sheeba), this protein is Ribonuclease HII.